The chain runs to 561 residues: Methionine--tRNA ligase (561 aa).

The 'HIGH' region signature appears at 11-21 (PYVNTVPHLGN). Cys143, Cys146, Cys156, and Cys159 together coordinate Zn(2+). Lys334 contributes to the ATP binding site.

The protein belongs to the class-I aminoacyl-tRNA synthetase family. MetG type 1 subfamily. Requires Zn(2+) as cofactor.

Its subcellular location is the cytoplasm. The enzyme catalyses tRNA(Met) + L-methionine + ATP = L-methionyl-tRNA(Met) + AMP + diphosphate. Functionally, is required not only for elongation of protein synthesis but also for the initiation of all mRNA translation through initiator tRNA(fMet) aminoacylation. This Ignicoccus hospitalis (strain KIN4/I / DSM 18386 / JCM 14125) protein is Methionine--tRNA ligase.